The sequence spans 329 residues: (12E)-labda-8(17),12,14-triene synthase (329 aa).

Residues Asp-90 and Glu-95 each coordinate Mg(2+). A DDXXXE motif motif is present at residues 90–95 (DDMHGE). Arg-184 is a binding site for substrate. Asn-230 and Ser-234 together coordinate Mg(2+). The short motif at 230–238 (NDLASYERE) is the NXXXSXXXE motif element. Substrate is bound at residue Arg-237. A Mg(2+)-binding site is contributed by Glu-238. 316–317 (RY) provides a ligand contact to substrate.

Belongs to the terpene synthase family. Requires Mg(2+) as cofactor.

It catalyses the reaction (+)-copalyl diphosphate = (12E)-labda-8(17),12,14-triene + diphosphate. Its function is as follows. Involved in the biosynthesis of the mercapturic acid derivative diterpene cyslabdan A, a potentiator of the beta-lactam antibiotic imipenem. Catalyzes the conversion of (+)-copalyl diphosphate to yield labda-8(17),12(E),14-triene (biformene). This Streptomyces cyslabdanicus protein is (12E)-labda-8(17),12,14-triene synthase.